The primary structure comprises 223 residues: Pyridoxine/pyridoxamine 5'-phosphate oxidase (223 aa).

Residues 9–12 (RVGY) and Lys76 contribute to the substrate site. Residues 71–76 (RTVLCK), 86–87 (FT), Lys93, and Gln115 contribute to the FMN site. Substrate is bound by residues Tyr133, Arg137, and Ser141. FMN contacts are provided by residues 150–151 (QS) and Trp196. 202–204 (RMH) serves as a coordination point for substrate. Arg206 is an FMN binding site.

The protein belongs to the pyridoxamine 5'-phosphate oxidase family. As to quaternary structure, homodimer. FMN serves as cofactor.

It catalyses the reaction pyridoxamine 5'-phosphate + O2 + H2O = pyridoxal 5'-phosphate + H2O2 + NH4(+). The catalysed reaction is pyridoxine 5'-phosphate + O2 = pyridoxal 5'-phosphate + H2O2. Its pathway is cofactor metabolism; pyridoxal 5'-phosphate salvage; pyridoxal 5'-phosphate from pyridoxamine 5'-phosphate: step 1/1. It participates in cofactor metabolism; pyridoxal 5'-phosphate salvage; pyridoxal 5'-phosphate from pyridoxine 5'-phosphate: step 1/1. Catalyzes the oxidation of either pyridoxine 5'-phosphate (PNP) or pyridoxamine 5'-phosphate (PMP) into pyridoxal 5'-phosphate (PLP). This Rhodococcus jostii (strain RHA1) protein is Pyridoxine/pyridoxamine 5'-phosphate oxidase.